The primary structure comprises 324 residues: tRNA U34 carboxymethyltransferase (324 aa).

Residues lysine 92, tryptophan 106, lysine 111, glycine 131, 153–155 (DPT), 181–182 (IE), methionine 197, tyrosine 201, and arginine 316 contribute to the carboxy-S-adenosyl-L-methionine site.

This sequence belongs to the class I-like SAM-binding methyltransferase superfamily. CmoB family. In terms of assembly, homotetramer.

The catalysed reaction is carboxy-S-adenosyl-L-methionine + 5-hydroxyuridine(34) in tRNA = 5-carboxymethoxyuridine(34) in tRNA + S-adenosyl-L-homocysteine + H(+). Its function is as follows. Catalyzes carboxymethyl transfer from carboxy-S-adenosyl-L-methionine (Cx-SAM) to 5-hydroxyuridine (ho5U) to form 5-carboxymethoxyuridine (cmo5U) at position 34 in tRNAs. The sequence is that of tRNA U34 carboxymethyltransferase from Methylococcus capsulatus (strain ATCC 33009 / NCIMB 11132 / Bath).